The sequence spans 194 residues: CASP-like protein Ni6 (194 aa).

Over 1–27 (MSSMETEKGAVPTPQAPPVAPTDNKYR) the chain is Cytoplasmic. Residues 28-48 (VVDVILRVLLLAASIASVVLM) form a helical membrane-spanning segment. The Extracellular portion of the chain corresponds to 49–75 (VTSKQTEIIVSPFGSRPNAAKFQNSPA). Residues 76-96 (FIYLVAALSVAGLYSIITALV) traverse the membrane as a helical segment. Residues 97–109 (SLSYMRKPIVPPK) lie on the Cytoplasmic side of the membrane. The chain crosses the membrane as a helical span at residues 110–130 (LFWILLIHDVLLLGIVAAATG). At 131-161 (TAGGVGYIGLKGNTHVRWGKIRNVYDKFCRH) the chain is on the extracellular side. The helical transmembrane segment at 162-182 (VGASIIVSLFAAAVLVLLVFV) threads the bilayer. Over 183 to 194 (NANSLYRRIPKY) the chain is Cytoplasmic.

The protein belongs to the Casparian strip membrane proteins (CASP) family. Homodimer and heterodimers.

The protein resides in the cell membrane. This is CASP-like protein Ni6 (Ni6) from Beta vulgaris subsp. maritima (Sea beet).